The sequence spans 153 residues: Insulin-like growth factor 1 (153 aa).

The interval 49–77 is b; the sequence is GPETLCGAELVDALQFVCGDRGFYFNKPT. Intrachain disulfides connect cysteine 54-cysteine 96, cysteine 66-cysteine 109, and cysteine 95-cysteine 100. Residues 78 to 89 are c; that stretch reads GYGSSSRRAPQT. Residues 90 to 110 are a; sequence GIVDECCFRSCDLRRLEMYCA. The segment at 111 to 118 is d; sequence PLKPAKSA. The propeptide at 119-153 is e peptide; sequence RSVRAQRHTDMPKAQKEVHLKNASRGSAGNKNYRM. The disordered stretch occupies residues 120 to 153; that stretch reads SVRAQRHTDMPKAQKEVHLKNASRGSAGNKNYRM. Residues 125-138 are compositionally biased toward basic and acidic residues; sequence RHTDMPKAQKEVHL. The segment covering 142-153 has biased composition (polar residues); that stretch reads SRGSAGNKNYRM.

The protein belongs to the insulin family. Forms a ternary complex with IGFR1 and ITGAV:ITGB3. Forms a ternary complex with IGFR1 and ITGA6:ITGB4. Forms a ternary complex with IGFBP3 and ALS.

The protein localises to the secreted. In terms of biological role, the insulin-like growth factors, isolated from plasma, are structurally and functionally related to insulin but have a much higher growth-promoting activity. May be a physiological regulator of [1-14C]-2-deoxy-D-glucose (2DG) transport and glycogen synthesis in osteoblasts. Stimulates glucose transport in bone-derived osteoblastic (PyMS) cells and is effective at much lower concentrations than insulin, not only regarding glycogen and DNA synthesis but also with regard to enhancing glucose uptake. May play a role in synapse maturation. Ca(2+)-dependent exocytosis of IGF1 is required for sensory perception of smell in the olfactory bulb. Acts as a ligand for IGF1R. Binds to the alpha subunit of IGF1R, leading to the activation of the intrinsic tyrosine kinase activity which autophosphorylates tyrosine residues in the beta subunit thus initiating a cascade of down-stream signaling events leading to activation of the PI3K-AKT/PKB and the Ras-MAPK pathways. Binds to integrins ITGAV:ITGB3 and ITGA6:ITGB4. Its binding to integrins and subsequent ternary complex formation with integrins and IGFR1 are essential for IGF1 signaling. Induces the phosphorylation and activation of IGFR1, MAPK3/ERK1, MAPK1/ERK2 and AKT1. As part of the MAPK/ERK signaling pathway, acts as a negative regulator of apoptosis in cardiomyocytes via promotion of STUB1/CHIP-mediated ubiquitination and degradation of ICER-type isoforms of CREM. The sequence is that of Insulin-like growth factor 1 from Ailuropoda melanoleuca (Giant panda).